A 393-amino-acid chain; its full sequence is Nucleoside permease NupC (393 aa).

The next 9 membrane-spanning stretches (helical) occupy residues 3-23 (YLIG…ASSG), 32-52 (IVVM…TGIG), 87-107 (TTFF…IGIL), 168-188 (LCAS…MTML), 191-211 (EYVV…ASII), 249-269 (VVVA…NGIF), 272-292 (VFGI…AFLV), 334-354 (AIVS…IIAG), and 372-392 (LKLL…VGLI).

The protein belongs to the concentrative nucleoside transporter (CNT) (TC 2.A.41) family.

The protein localises to the cell membrane. Its function is as follows. Transport of the pyrimidine nucleoside uridine. This chain is Nucleoside permease NupC, found in Bacillus subtilis (strain 168).